A 214-amino-acid polypeptide reads, in one-letter code: Large ribosomal subunit protein bL25 (214 aa).

The tract at residues 194-214 (TTEAEETAEPEVIRRKEEEEE) is disordered. Residues 204–214 (EVIRRKEEEEE) are compositionally biased toward basic and acidic residues.

The protein belongs to the bacterial ribosomal protein bL25 family. CTC subfamily. Part of the 50S ribosomal subunit; part of the 5S rRNA/L5/L18/L25 subcomplex. Contacts the 5S rRNA. Binds to the 5S rRNA independently of L5 and L18.

Functionally, this is one of the proteins that binds to the 5S RNA in the ribosome where it forms part of the central protuberance. This Thermotoga petrophila (strain ATCC BAA-488 / DSM 13995 / JCM 10881 / RKU-1) protein is Large ribosomal subunit protein bL25.